The chain runs to 249 residues: Triosephosphate isomerase (249 aa).

Substrate is bound by residues Asn-10 and Lys-12. The active-site Electrophile is His-94. The active-site Proton acceptor is the Glu-166.

Belongs to the triosephosphate isomerase family. In terms of assembly, homodimer. Post-translationally, the N-terminus is blocked.

The catalysed reaction is D-glyceraldehyde 3-phosphate = dihydroxyacetone phosphate. Its pathway is carbohydrate biosynthesis; gluconeogenesis. It functions in the pathway carbohydrate degradation; glycolysis; D-glyceraldehyde 3-phosphate from glycerone phosphate: step 1/1. This chain is Triosephosphate isomerase (TPI1), found in Paracoccidioides lutzii (strain ATCC MYA-826 / Pb01) (Paracoccidioides brasiliensis).